The sequence spans 412 residues: Multifunctional CCA protein (412 aa).

ATP-binding residues include Gly-8 and Arg-11. CTP is bound by residues Gly-8 and Arg-11. Mg(2+)-binding residues include Asp-21 and Asp-23. ATP is bound by residues Arg-91, Arg-137, and Arg-140. 3 residues coordinate CTP: Arg-91, Arg-137, and Arg-140. One can recognise an HD domain in the interval 228–329; that stretch reads TGIHTLMTLS…VKLFDSIDAW (102 aa).

The protein belongs to the tRNA nucleotidyltransferase/poly(A) polymerase family. Bacterial CCA-adding enzyme type 1 subfamily. As to quaternary structure, monomer. Can also form homodimers and oligomers. Requires Mg(2+) as cofactor. Ni(2+) is required as a cofactor.

The catalysed reaction is a tRNA precursor + 2 CTP + ATP = a tRNA with a 3' CCA end + 3 diphosphate. It catalyses the reaction a tRNA with a 3' CCA end + 2 CTP + ATP = a tRNA with a 3' CCACCA end + 3 diphosphate. Functionally, catalyzes the addition and repair of the essential 3'-terminal CCA sequence in tRNAs without using a nucleic acid template. Adds these three nucleotides in the order of C, C, and A to the tRNA nucleotide-73, using CTP and ATP as substrates and producing inorganic pyrophosphate. tRNA 3'-terminal CCA addition is required both for tRNA processing and repair. Also involved in tRNA surveillance by mediating tandem CCA addition to generate a CCACCA at the 3' terminus of unstable tRNAs. While stable tRNAs receive only 3'-terminal CCA, unstable tRNAs are marked with CCACCA and rapidly degraded. The sequence is that of Multifunctional CCA protein from Escherichia coli (strain SMS-3-5 / SECEC).